Consider the following 697-residue polypeptide: Potassium-transporting ATPase ATP-binding subunit (697 aa).

The next 4 membrane-spanning stretches (helical) occupy residues 55 to 75 (PIMFVVEIGFIITFILSFLPS), 79 to 99 (SIPGWFNITVSLILLFTVLFA), 245 to 265 (LTLIFLIVVVTLPIFTNYLGF), and 271 to 291 (VLVALLVCLIPTTIGGLLSAI). Aspartate 324 serves as the catalytic 4-aspartylphosphate intermediate. ATP-binding positions include aspartate 361, glutamate 365, 393–400 (FKAETRMS), and lysine 412. 2 residues coordinate Mg(2+): aspartate 535 and aspartate 539. 3 consecutive transmembrane segments (helical) span residues 605–625 (FAIIPAMFTLAIPQMEALNIM), 633–653 (AILSALIFNAVIIPLLIPLAM), and 677–697 (GGVIVPFIGIKVIDIIVGLFI).

The protein belongs to the cation transport ATPase (P-type) (TC 3.A.3) family. Type IA subfamily. The system is composed of three essential subunits: KdpA, KdpB and KdpC.

It localises to the cell membrane. It carries out the reaction K(+)(out) + ATP + H2O = K(+)(in) + ADP + phosphate + H(+). Its function is as follows. Part of the high-affinity ATP-driven potassium transport (or Kdp) system, which catalyzes the hydrolysis of ATP coupled with the electrogenic transport of potassium into the cytoplasm. This subunit is responsible for energy coupling to the transport system and for the release of the potassium ions to the cytoplasm. The chain is Potassium-transporting ATPase ATP-binding subunit from Bacillus cereus (strain G9842).